Here is a 404-residue protein sequence, read N- to C-terminus: Cysteine desulfurase IscS (404 aa).

Residues 75-76, N155, Q183, and 203-205 each bind pyridoxal 5'-phosphate; these read AT and SGH. K206 carries the N6-(pyridoxal phosphate)lysine modification. Residue T243 participates in pyridoxal 5'-phosphate binding. Residue C328 is the Cysteine persulfide intermediate of the active site. C328 contacts [2Fe-2S] cluster.

This sequence belongs to the class-V pyridoxal-phosphate-dependent aminotransferase family. NifS/IscS subfamily. As to quaternary structure, homodimer. Forms a heterotetramer with IscU, interacts with other sulfur acceptors. The cofactor is pyridoxal 5'-phosphate.

Its subcellular location is the cytoplasm. It carries out the reaction (sulfur carrier)-H + L-cysteine = (sulfur carrier)-SH + L-alanine. The protein operates within cofactor biosynthesis; iron-sulfur cluster biosynthesis. In terms of biological role, master enzyme that delivers sulfur to a number of partners involved in Fe-S cluster assembly, tRNA modification or cofactor biosynthesis. Catalyzes the removal of elemental sulfur and selenium atoms from cysteine and selenocysteine to produce alanine. Functions as a sulfur delivery protein for Fe-S cluster synthesis onto IscU, an Fe-S scaffold assembly protein, as well as other S acceptor proteins. Also functions as a selenium delivery protein in the pathway for the biosynthesis of selenophosphate. The sequence is that of Cysteine desulfurase IscS from Salmonella arizonae (strain ATCC BAA-731 / CDC346-86 / RSK2980).